We begin with the raw amino-acid sequence, 535 residues long: Potassium channel subfamily K member 10 (535 aa).

Residues 1–68 (MYFSYIGYFF…GLQTVMKWKT (68 aa)) lie on the Cytoplasmic side of the membrane. Residues 69–89 (VVAIFVVVVVYLVTGGLVFRA) traverse the membrane as a helical segment. The pore-forming intramembrane region spans 151–177 (LGSAFFFAGTVITTIGYGNIAPSTEGG). Residues T164, I165, G166, and Y167 each contribute to the K(+) site. The interval 164 to 169 (TIGYGN) is selectivity filter 1. The helical transmembrane segment at 179 to 199 (IFCILYAIFGIPLFGFLLAGI) threads the bilayer. Residues 200–230 (GDQLGTIFGKSIARVEKVFRKKQVSQTKIRV) lie on the Cytoplasmic side of the membrane. Residues 231–251 (ISTILFILAGCIVFVTIPAVI) traverse the membrane as a helical segment. Positions 260 to 291 (ALESIYFVVVTLTTVGFGDFVAGGNAGINYRE) form an intramembrane region, pore-forming. K(+) contacts are provided by T273, V274, G275, and F276. The segment at 273–278 (TVGFGD) is selectivity filter 2. The chain crosses the membrane as a helical span at residues 296 to 316 (LVWFWILVGLAYFAAVLSMIG). The Cytoplasmic portion of the chain corresponds to 317-535 (DWLRVLSKKT…ENNSLLEDRN (219 aa)). 2 disordered regions span residues 410–438 (QESI…ASED) and 510–535 (EMEN…EDRN). The segment covering 525-535 (LENNSLLEDRN) has biased composition (polar residues).

As to quaternary structure, homodimer; disulfide-linked. Forms heterodimers with other 2-pore domain K(+) channel subunits, such as KCNK2, KCNK4 and KCNK18. In terms of tissue distribution, detected in dorsal root ganglia (DRG) neurons (at protein level).

It localises to the cell membrane. It catalyses the reaction K(+)(in) = K(+)(out). The enzyme catalyses Rb(+)(in) = Rb(+)(out). The catalysed reaction is Cs(+)(in) = Cs(+)(out). With respect to regulation, activated by stimuli such as mechanical stretch, acidic pH and polyunsaturated free fatty acids. Activated by a dihydroacridine analog, ML67-33. Inhibited by polycationic dye ruthenium red. Selectively activated by T2A3 (2-[(4-chloro-3-methylphenyl)amino] benzoic acid). Its function is as follows. K(+) channel that conducts voltage-dependent outward rectifying currents upon membrane depolarization. Voltage sensing is coupled to K(+) electrochemical gradient in an 'ion flux gating' mode where outward but not inward ion flow opens the gate. Converts to voltage-independent 'leak' conductance mode upon stimulation by various stimuli including mechanical membrane stretch, acidic pH, heat and lipids. Homo- and heterodimerizes to form functional channels with distinct regulatory and gating properties. In trigeminal ganglia sensory neurons, the heterodimer of KCNK10/TREK-2 and KCNK18/TRESK inhibits neuronal firing and neurogenic inflammation by stabilizing the resting membrane potential at K(+) equilibrium potential as well as by regulating the threshold of action potentials and the spike frequency. Permeable to other monovalent ions such as Rb(+) and Cs(+). In Mus musculus (Mouse), this protein is Potassium channel subfamily K member 10.